A 293-amino-acid chain; its full sequence is NAD kinase (293 aa).

Asp-73 serves as the catalytic Proton acceptor. Residues 73–74, 147–148, Arg-175, Asp-177, and 188–193 each bind NAD(+); these read DG, NE, and TAYSMS.

The protein belongs to the NAD kinase family. The cofactor is a divalent metal cation.

It localises to the cytoplasm. It catalyses the reaction NAD(+) + ATP = ADP + NADP(+) + H(+). In terms of biological role, involved in the regulation of the intracellular balance of NAD and NADP, and is a key enzyme in the biosynthesis of NADP. Catalyzes specifically the phosphorylation on 2'-hydroxyl of the adenosine moiety of NAD to yield NADP. In Colwellia psychrerythraea (strain 34H / ATCC BAA-681) (Vibrio psychroerythus), this protein is NAD kinase.